A 426-amino-acid polypeptide reads, in one-letter code: MPSNQELFERAQKTIPGGVNSPVRAFRSVGGTPRFIERAQGAYFWDAEGKRYIDYIGSWGPMIVGHVHPEVLEAVQRVLSKGFSFGAPTEAEIEIAEEICKLVPSMEQVRMVSSGTEATMSALRLARGFTDRSRIVKFEGCYHGHADSLLVKAGSGLLTFGNPTSAGVPVDIAKHTTVLEYNNVAALEEAFSAFGNEIASVIVEPVAGNMNLVRATPEFLGALRRLCSEYGSVLIFDEVMCGFRVALGGAQQLYGIRPDLTCLGKVIGGGMPAAAFGGRRDIMAHLAPLGGVYQAGTLSGNPIAVAAGLKTLQLIQAPGFYDALSRRTTRLVQDLTEAAREAKIPFTADSVGGMFGLYFSESVPASFAEISRCDVPRFNAFFHKMLDAGVYFAPSAYEAGFVSSAHDDATVEATIEAARGAFKSLA.

Residue Lys265 is modified to N6-(pyridoxal phosphate)lysine.

The protein belongs to the class-III pyridoxal-phosphate-dependent aminotransferase family. HemL subfamily. As to quaternary structure, homodimer. The cofactor is pyridoxal 5'-phosphate.

The protein localises to the cytoplasm. The enzyme catalyses (S)-4-amino-5-oxopentanoate = 5-aminolevulinate. Its pathway is porphyrin-containing compound metabolism; protoporphyrin-IX biosynthesis; 5-aminolevulinate from L-glutamyl-tRNA(Glu): step 2/2. The protein is Glutamate-1-semialdehyde 2,1-aminomutase of Paraburkholderia phymatum (strain DSM 17167 / CIP 108236 / LMG 21445 / STM815) (Burkholderia phymatum).